Reading from the N-terminus, the 161-residue chain is Shikimate kinase (161 aa).

10–15 (GAGKTT) lines the ATP pocket. Mg(2+) is bound at residue Thr-14. 3 residues coordinate substrate: Asp-28, Arg-52, and Gly-74. Arg-114 is an ATP binding site. Arg-132 serves as a coordination point for substrate.

Belongs to the shikimate kinase family. As to quaternary structure, monomer. Mg(2+) is required as a cofactor.

The protein localises to the cytoplasm. It catalyses the reaction shikimate + ATP = 3-phosphoshikimate + ADP + H(+). It participates in metabolic intermediate biosynthesis; chorismate biosynthesis; chorismate from D-erythrose 4-phosphate and phosphoenolpyruvate: step 5/7. Catalyzes the specific phosphorylation of the 3-hydroxyl group of shikimic acid using ATP as a cosubstrate. The polypeptide is Shikimate kinase (Streptococcus gordonii (strain Challis / ATCC 35105 / BCRC 15272 / CH1 / DL1 / V288)).